The following is a 243-amino-acid chain: 1-(5-phosphoribosyl)-5-[(5-phosphoribosylamino)methylideneamino] imidazole-4-carboxamide isomerase (243 aa).

Residue Asp-8 is the Proton acceptor of the active site. Asp-130 (proton donor) is an active-site residue.

This sequence belongs to the HisA/HisF family.

The protein resides in the cytoplasm. It carries out the reaction 1-(5-phospho-beta-D-ribosyl)-5-[(5-phospho-beta-D-ribosylamino)methylideneamino]imidazole-4-carboxamide = 5-[(5-phospho-1-deoxy-D-ribulos-1-ylimino)methylamino]-1-(5-phospho-beta-D-ribosyl)imidazole-4-carboxamide. Its pathway is amino-acid biosynthesis; L-histidine biosynthesis; L-histidine from 5-phospho-alpha-D-ribose 1-diphosphate: step 4/9. In Acinetobacter baylyi (strain ATCC 33305 / BD413 / ADP1), this protein is 1-(5-phosphoribosyl)-5-[(5-phosphoribosylamino)methylideneamino] imidazole-4-carboxamide isomerase.